Reading from the N-terminus, the 340-residue chain is Immunoglobulin-binding protein 1 family member C (340 aa).

2 disordered regions span residues 223-243 (KDSS…PPMK) and 292-340 (PEEF…QNMG). The segment covering 303–314 (EDQEKEEEDDEQ) has biased composition (acidic residues). Residues 318–330 (RAREWDDWKDTHP) are compositionally biased toward basic and acidic residues.

Belongs to the IGBP1/TAP42 family.

This Homo sapiens (Human) protein is Immunoglobulin-binding protein 1 family member C.